A 474-amino-acid polypeptide reads, in one-letter code: MAQDTQTNTAVQGKIVQCIGAVVDVEFPRDQMPKIYDALKLEGSALTLEVQQQLGDGIVRTIALGSSDGLRRGLMVSNTANPIMVPVGTATLGRIMDVLGTPIDERGPVSTEKYASIHRKAPTYDELSPSQELLETGIKVIDLVCPFAKGGKVGLFGGAGVGKTVNMMELINNIAKAHSGLSVFAGVGERTREGNDFYHEMADSGVVNLENLGESKVAMVYGQMNEPPGNRLRVALTGLTIAESFRDEGKDVLFFVDNIYRFTLAGTEVSALLGRMPSAVGYQPTLAEEMGRLQERITSTKVGSITSIQAVYVPADDLTDPSPATTFAHLDSTVVLSRDIASLGIYPAVDPLDSTSRQLDPNVVGQDHYETARAVQGTLQRYKELRDIIAILGMDELAPEDKLTVARARKIQRFLSQPFHVAEVFTGSPGKYVSLAETIRGFKMIVAGECDHLPEQAFYMVGTIDEAFEKAKKI.

An ATP-binding site is contributed by glycine 157 to threonine 164.

The protein belongs to the ATPase alpha/beta chains family. In terms of assembly, F-type ATPases have 2 components, CF(1) - the catalytic core - and CF(0) - the membrane proton channel. CF(1) has five subunits: alpha(3), beta(3), gamma(1), delta(1), epsilon(1). CF(0) has three main subunits: a(1), b(2) and c(9-12). The alpha and beta chains form an alternating ring which encloses part of the gamma chain. CF(1) is attached to CF(0) by a central stalk formed by the gamma and epsilon chains, while a peripheral stalk is formed by the delta and b chains.

It is found in the cell inner membrane. The enzyme catalyses ATP + H2O + 4 H(+)(in) = ADP + phosphate + 5 H(+)(out). In terms of biological role, produces ATP from ADP in the presence of a proton gradient across the membrane. The catalytic sites are hosted primarily by the beta subunits. The protein is ATP synthase subunit beta 1 of Albidiferax ferrireducens (strain ATCC BAA-621 / DSM 15236 / T118) (Rhodoferax ferrireducens).